Consider the following 458-residue polypeptide: ATP-dependent protease ATPase subunit HslU (458 aa).

ATP contacts are provided by residues Val-18, 60–65, Asp-270, Glu-335, and Arg-407; that span reads GVGKTE.

This sequence belongs to the ClpX chaperone family. HslU subfamily. In terms of assembly, a double ring-shaped homohexamer of HslV is capped on each side by a ring-shaped HslU homohexamer. The assembly of the HslU/HslV complex is dependent on binding of ATP.

It localises to the cytoplasm. ATPase subunit of a proteasome-like degradation complex; this subunit has chaperone activity. The binding of ATP and its subsequent hydrolysis by HslU are essential for unfolding of protein substrates subsequently hydrolyzed by HslV. HslU recognizes the N-terminal part of its protein substrates and unfolds these before they are guided to HslV for hydrolysis. This Desulfitobacterium hafniense (strain DSM 10664 / DCB-2) protein is ATP-dependent protease ATPase subunit HslU.